Consider the following 701-residue polypeptide: Polyribonucleotide nucleotidyltransferase (701 aa).

Mg(2+) is bound by residues Asp-485 and Asp-491. A KH domain is found at 552-611 (PKTQIMSINPDKIRDVIGAGGKVINKIIQDTGVKIDIKEDGTVFVSSTDHNGVNEAIKII). One can recognise an S1 motif domain in the interval 621 to 689 (GEVYLGKVTK…NQGRINLSRK (69 aa)).

The protein belongs to the polyribonucleotide nucleotidyltransferase family. The cofactor is Mg(2+).

The protein resides in the cytoplasm. The enzyme catalyses RNA(n+1) + phosphate = RNA(n) + a ribonucleoside 5'-diphosphate. Its function is as follows. Involved in mRNA degradation. Catalyzes the phosphorolysis of single-stranded polyribonucleotides processively in the 3'- to 5'-direction. This Clostridium beijerinckii (strain ATCC 51743 / NCIMB 8052) (Clostridium acetobutylicum) protein is Polyribonucleotide nucleotidyltransferase.